Consider the following 188-residue polypeptide: Transmembrane protein 160 (188 aa).

The transit peptide at M1–R96 directs the protein to the mitochondrion. Residues P25–V52 form a disordered region. Residues R29–A38 show a composition bias toward low complexity. Phosphoserine is present on S48. Transmembrane regions (helical) follow at residues F102–A122 and A135–L155.

It belongs to the TMEM160 family.

The protein resides in the mitochondrion inner membrane. This Bos taurus (Bovine) protein is Transmembrane protein 160.